We begin with the raw amino-acid sequence, 530 residues long: Autoinducer-2 kinase (530 aa).

The protein belongs to the FGGY kinase family.

It is found in the cytoplasm. It carries out the reaction (S)-4,5-dihydroxypentane-2,3-dione + ATP = (2S)-2-hydroxy-3,4-dioxopentyl phosphate + ADP + H(+). Its function is as follows. Catalyzes the phosphorylation of autoinducer-2 (AI-2) to phospho-AI-2, which subsequently inactivates the transcriptional regulator LsrR and leads to the transcription of the lsr operon. Phosphorylates the ring-open form of (S)-4,5-dihydroxypentane-2,3-dione (DPD), which is the precursor to all AI-2 signaling molecules, at the C5 position. This Salmonella paratyphi A (strain ATCC 9150 / SARB42) protein is Autoinducer-2 kinase.